Here is a 309-residue protein sequence, read N- to C-terminus: Carbamate kinase 2 (309 aa).

Belongs to the carbamate kinase family.

It localises to the cytoplasm. It carries out the reaction hydrogencarbonate + NH4(+) + ATP = carbamoyl phosphate + ADP + H2O + H(+). Its pathway is metabolic intermediate metabolism; carbamoyl phosphate degradation; CO(2) and NH(3) from carbamoyl phosphate: step 1/1. This Staphylococcus epidermidis (strain ATCC 12228 / FDA PCI 1200) protein is Carbamate kinase 2 (arcC2).